Here is a 232-residue protein sequence, read N- to C-terminus: Enolase-phosphatase E1 (232 aa).

Belongs to the HAD-like hydrolase superfamily. MasA/MtnC family. In terms of assembly, monomer. Requires Mg(2+) as cofactor.

The enzyme catalyses 5-methylsulfanyl-2,3-dioxopentyl phosphate + H2O = 1,2-dihydroxy-5-(methylsulfanyl)pent-1-en-3-one + phosphate. It functions in the pathway amino-acid biosynthesis; L-methionine biosynthesis via salvage pathway; L-methionine from S-methyl-5-thio-alpha-D-ribose 1-phosphate: step 3/6. It participates in amino-acid biosynthesis; L-methionine biosynthesis via salvage pathway; L-methionine from S-methyl-5-thio-alpha-D-ribose 1-phosphate: step 4/6. Functionally, bifunctional enzyme that catalyzes the enolization of 2,3-diketo-5-methylthiopentyl-1-phosphate (DK-MTP-1-P) into the intermediate 2-hydroxy-3-keto-5-methylthiopentenyl-1-phosphate (HK-MTPenyl-1-P), which is then dephosphorylated to form the acireductone 1,2-dihydroxy-3-keto-5-methylthiopentene (DHK-MTPene). The sequence is that of Enolase-phosphatase E1 from Sorangium cellulosum (strain So ce56) (Polyangium cellulosum (strain So ce56)).